The sequence spans 683 residues: Long-chain-fatty-acid--CoA ligase 5 (683 aa).

Residues 12–32 form a helical; Signal-anchor for type III membrane protein membrane-spanning segment; sequence LPTPALICLLTFGTAIFLWLI. Residues 33–683 lie on the Cytoplasmic side of the membrane; that stretch reads NRPQPVLPLI…IKSLYESIEE (651 aa). K361 carries the N6-acetyllysine modification.

This sequence belongs to the ATP-dependent AMP-binding enzyme family.

Its subcellular location is the mitochondrion. The protein localises to the endoplasmic reticulum. It is found in the mitochondrion outer membrane. It localises to the endoplasmic reticulum membrane. The protein resides in the cell membrane. It carries out the reaction a long-chain fatty acid + ATP + CoA = a long-chain fatty acyl-CoA + AMP + diphosphate. The enzyme catalyses (5Z,8Z,11Z,14Z)-eicosatetraenoate + ATP + CoA = (5Z,8Z,11Z,14Z)-eicosatetraenoyl-CoA + AMP + diphosphate. It catalyses the reaction hexadecanoate + ATP + CoA = hexadecanoyl-CoA + AMP + diphosphate. The catalysed reaction is (E)-hexadec-2-enoate + ATP + CoA = (2E)-hexadecenoyl-CoA + AMP + diphosphate. It carries out the reaction 15-hydroxy-(5Z,8Z,11Z,13E)-eicosatetraenoate + ATP + CoA = 15-hydroxy-(5Z,8Z,11Z,13E)-eicosatetraenoyl-CoA + AMP + diphosphate. The enzyme catalyses 12-hydroxy-(5Z,8Z,10E,14Z)-eicosatetraenoate + ATP + CoA = 12-hydroxy-(5Z,8Z,10E,14Z)-eicosatetraenoyl-CoA + AMP + diphosphate. It catalyses the reaction 5-hydroxy-(6E,8Z,11Z,14Z)-eicosatetraenoate + ATP + CoA = 5-hydroxy-(6E,8Z,11Z,14Z)-eicosatetraenoyl-CoA + AMP + diphosphate. The catalysed reaction is 14,15-epoxy-(5Z,8Z,11Z)-eicosatrienoate + ATP + CoA = 14,15-epoxy-(5Z,8Z,11Z)-eicosatrienoyl-CoA + AMP + diphosphate. It carries out the reaction 11,12-epoxy-(5Z,8Z,14Z)-eicosatrienoate + ATP + CoA = 11,12-epoxy-(5Z,8Z,14Z)-eicosatrienoyl-CoA + AMP + diphosphate. The enzyme catalyses (9Z)-octadecenoate + ATP + CoA = (9Z)-octadecenoyl-CoA + AMP + diphosphate. Its function is as follows. Catalyzes the conversion of long-chain fatty acids to their active form acyl-CoAs for both synthesis of cellular lipids, and degradation via beta-oxidation. ACSL5 may activate fatty acids from exogenous sources for the synthesis of triacylglycerol destined for intracellular storage. It was suggested that it may also stimulate fatty acid oxidation. At the villus tip of the crypt-villus axis of the small intestine may sensitize epithelial cells to apoptosis specifically triggered by the death ligand TRAIL. May have a role in the survival of glioma cells. Utilizes a wide range of saturated fatty acids with a preference for C16-C18 unsaturated fatty acids. The chain is Long-chain-fatty-acid--CoA ligase 5 from Mus musculus (Mouse).